Reading from the N-terminus, the 761-residue chain is MVAMSEALVHARITLLQAWLRMLLFSSVWPPTWCAEYKGPPETVKPLRVIVSSKDMSLAGWMSYSLYFGGQRHIISMKSKNFLESRQLPVFTYNDQGVLFEDRPFVQNDCYYLGFVDGDLESMAALTTCFGGFQGILQINDTAYEIKPKSPSSTFEHLLYKIDSEKTQLRPMRCGLTDEEIAGQVRLQENGKSTRMQSIYGSWWSHGLYIKLALVIDHEQYLYRKKNTSLVIRDVLSIMQGINLFLLSVDINVVLLGLTIWTNGNPIPVQDIYALLPAFCTWKGTNLDSQIPYDIAHLFVNYTFSNYFGIAYVGTVCDKTFGCGIDSIAEDDFLTIGHIVAHEIGHNLGMSHDGILCTCGEESCLMSATMDSSQKLSNCSYEVLWAHMINKSCIHREPRPSDIFQLKVCGNGIVEEGEQCDCGSSENCRRNRCCMPSCTLRSKAKCDTGLCCNRKCQIQPSGTLCRARENECDLPEWCNGTSHECPEDLFVQDGTSCPGDGYCYEKRCNSHDVHCQRVFGQLAMKASDSCYKELNTRGDRFGNCGFINNEYVRCEISDILCGRIQCDKVGTLPILQNHYTIHWTHFNSVSCWSTDYHLGMKIADLGDIKDGTNCGPQHVCIARKCVNKPSWVNDCTPETCNMKGVCNNKQHCHCDVGWSPPNCQETGTGGSIDSGSPGNEVYEDEVVSKKDAPEKPNVIIWLLPIICVAVVLSVLFCLSGATKKSREAAASQPAEERVKPPYEGAEPSYETVKPPDEWANP.

The N-terminal stretch at Met1–Cys34 is a signal peptide. Positions Ala35–Tyr200 are excised as a propeptide. Over Ala35–Asn697 the chain is Extracellular. Asn140 carries an N-linked (GlcNAc...) asparagine glycan. A Cysteine switch motif is present at residues Met172–Glu179. Position 174 (Cys174) interacts with Zn(2+). Residues Leu208–Pro400 form the Peptidase M12B domain. Residues Asn227 and Asn301 are each glycosylated (N-linked (GlcNAc...) asparagine). Cystine bridges form between Cys323–Cys393, Cys357–Cys379, Cys359–Cys364, Cys465–Cys485, Cys635–Cys646, Cys640–Cys652, and Cys654–Cys663. Residue His342 coordinates Zn(2+). The active site involves Glu343. Residues His346 and His352 each contribute to the Zn(2+) site. Residues Asn378, Asn390, and Asn479 are each glycosylated (N-linked (GlcNAc...) asparagine). The Disintegrin domain occupies Leu406–Asp493. The 34-residue stretch at Trp631–Gln664 folds into the EGF-like domain. Residues Val698–Leu718 traverse the membrane as a helical segment. Residues Ser719–Pro761 are Cytoplasmic-facing. A disordered region spans residues Ser725–Pro761.

As to quaternary structure, monomer. Requires Zn(2+) as cofactor. Post-translationally, the prodomain is removed during sperm passage through the caput epididymis after the protein has reached the cell surface. Not processed in the secretory pathway. As to expression, expressed exclusively in testis and more specifically on the surface of mature sperm (at protein level).

The protein resides in the membrane. In terms of biological role, plasma membrane protease present on mature sperm that may be involved in sperm function during epididymal maturation and/or fertilization. This chain is Disintegrin and metalloproteinase domain-containing protein 24, found in Mus musculus (Mouse).